Here is a 388-residue protein sequence, read N- to C-terminus: 3-ketoacyl-CoA thiolase (388 aa).

Residue Cys91 is the Acyl-thioester intermediate of the active site. Catalysis depends on proton acceptor residues His343 and Cys373.

Belongs to the thiolase-like superfamily. Thiolase family. In terms of assembly, heterotetramer of two alpha chains (FadB) and two beta chains (FadA).

The protein localises to the cytoplasm. It carries out the reaction an acyl-CoA + acetyl-CoA = a 3-oxoacyl-CoA + CoA. It functions in the pathway lipid metabolism; fatty acid beta-oxidation. Catalyzes the final step of fatty acid oxidation in which acetyl-CoA is released and the CoA ester of a fatty acid two carbons shorter is formed. The polypeptide is 3-ketoacyl-CoA thiolase (Photorhabdus laumondii subsp. laumondii (strain DSM 15139 / CIP 105565 / TT01) (Photorhabdus luminescens subsp. laumondii)).